A 331-amino-acid chain; its full sequence is FMRFamide-related neuropeptides (331 aa).

Residues 1 to 25 form the signal peptide; that stretch reads MRCWSPCSLLVVIVIYCLSSHTSEA. Residues 26 to 65 constitute a propeptide that is removed on maturation; it reads FDLAQACVESQRLSLLPICDTIFAVQQEGVQQSADDGMRS. Phenylalanine amide is present on residues Phe-71 and Phe-83. Positions 86 to 94 are excised as a propeptide; the sequence is NVPDLPFED. Phe-100 is subject to Phenylalanine amide. A propeptide spanning residues 103 to 168 is cleaved from the precursor; the sequence is AAPQLDELLK…YIDDVEDSDV (66 aa). A disordered region spans residues 122–158; that stretch reads QKADETSVRRKRSTDAAPQNNAENPEQKNDSAKITKR. Residues 146-158 are compositionally biased toward basic and acidic residues; sequence PEQKNDSAKITKR. Phe-174 and Phe-181 each carry phenylalanine amide. Residues 184–194 constitute a propeptide that is removed on maturation; sequence NPSDVGNKLTE. Phenylalanine amide is present on Phe-200. A propeptide spanning residues 203 to 205 is cleaved from the precursor; sequence DPE. At Phe-211 the chain carries Phenylalanine amide. The propeptide occupies 214–216; the sequence is SDD. Phe-222 carries the post-translational modification Phenylalanine amide. Positions 225 to 236 are excised as a propeptide; that stretch reads NPSDAEDELEED. The residue at position 242 (Phe-242) is a Phenylalanine amide. A propeptide spanning residues 245-254 is cleaved from the precursor; that stretch reads GGEDDEEEAE. Phe-260 is modified (phenylalanine amide). The propeptide occupies 263–265; the sequence is DPE. Position 271 is a phenylalanine amide (Phe-271). Residues 274 to 277 constitute a propeptide that is removed on maturation; the sequence is SGED. A compositionally biased stretch (basic and acidic residues) spans 279-296; the sequence is RFMRFGRNPDEQEADKRF. The tract at residues 279-310 is disordered; it reads RFMRFGRNPDEQEADKRFMRFGRGGEDDEVST. Residue Phe-283 is modified to Phenylalanine amide. The propeptide occupies 286–293; that stretch reads NPDEQEAD. A Phenylalanine amide modification is found at Phe-299. The propeptide occupies 302–312; the sequence is GGEDDEVSTED. Phe-318 is subject to Phenylalanine amide. A propeptide spanning residues 321-331 is cleaved from the precursor; that stretch reads SADKCKGCLEG.

Belongs to the FARP (FMRFamide related peptide) family.

Its subcellular location is the secreted. In terms of biological role, excitatory neurotransmitters that directly modulate chromatophore function by activating chromatophore expansion at the chromatophore neuromuscular junction. The sequence is that of FMRFamide-related neuropeptides from Doryteuthis opalescens (California market squid).